Reading from the N-terminus, the 907-residue chain is Aldehyde oxidoreductase (907 aa).

A 2Fe-2S ferredoxin-type domain is found at isoleucine 2–valine 79. Residues cysteine 40, cysteine 45, cysteine 48, cysteine 60, cysteine 100, cysteine 103, cysteine 137, and cysteine 139 each coordinate [2Fe-2S] cluster. The Mo-molybdopterin cytosine dinucleotide site is built by histidine 653 and glutamate 869.

This sequence belongs to the xanthine dehydrogenase family. In terms of assembly, homodimer. Requires Mo-molybdopterin cytosine dinucleotide as cofactor. It depends on [2Fe-2S] cluster as a cofactor.

It carries out the reaction an aldehyde + A + H2O = a carboxylate + AH2 + H(+). This chain is Aldehyde oxidoreductase (mop), found in Megalodesulfovibrio gigas (Desulfovibrio gigas).